The chain runs to 406 residues: Proteasome-activating nucleotidase 1 (406 aa).

A coiled-coil region spans residues 13–72; the sequence is YDKDSASQQEKITALQERLEVLETQNEEMRDKLLDTNAENNKYQQKLERLTHENKKLKQS. Residues 194–199 and His333 each bind ATP; that span reads GTGKTM. The segment at 404 to 406 is docks into pockets in the proteasome alpha-ring to cause gate opening; the sequence is AFA.

It belongs to the AAA ATPase family. As to quaternary structure, homododecamer, in a proposed two stacked hexameric ring configuration, but may also form homohexamer. The hexameric complex has likely a two-ring architecture resembling a top hat that caps the 20S proteasome core at one or both ends. Upon ATP-binding, the C-terminus of PAN probably interacts with the alpha-rings of the proteasome core by binding to the intersubunit pockets. Interacts with SAMP1-MoaE conjugate in vitro, but does not bind to SAMP1 or MoaE alone. Interacts with NcsA.

It localises to the cytoplasm. With respect to regulation, ATPase activity is inhibited by EDTA in vitro. ATPase which is responsible for recognizing, binding, unfolding and translocation of substrate proteins into the archaeal 20S proteasome core particle. Is essential for opening the gate of the 20S proteasome via an interaction with its C-terminus, thereby allowing substrate entry and access to the site of proteolysis. Thus, the C-terminus of the proteasomal ATPase functions like a 'key in a lock' to induce gate opening and therefore regulate proteolysis. Unfolding activity requires energy from ATP hydrolysis, whereas ATP binding alone promotes ATPase-20S proteasome association which triggers gate opening, and supports translocation of unfolded substrates. Is also able to cleave other nucleoside triphosphates including GTP and TTP, but the rate of hydrolysis is 4- to 5-fold slower than for ATP. In Haloferax volcanii (strain ATCC 29605 / DSM 3757 / JCM 8879 / NBRC 14742 / NCIMB 2012 / VKM B-1768 / DS2) (Halobacterium volcanii), this protein is Proteasome-activating nucleotidase 1.